The primary structure comprises 200 residues: Large ribosomal subunit protein uL4 (200 aa).

The tract at residues 43-71 is disordered; sequence RAQKTRAEVSGSGKKPWRQKGTGRARSGD.

The protein belongs to the universal ribosomal protein uL4 family. As to quaternary structure, part of the 50S ribosomal subunit.

In terms of biological role, one of the primary rRNA binding proteins, this protein initially binds near the 5'-end of the 23S rRNA. It is important during the early stages of 50S assembly. It makes multiple contacts with different domains of the 23S rRNA in the assembled 50S subunit and ribosome. Forms part of the polypeptide exit tunnel. This Mannheimia succiniciproducens (strain KCTC 0769BP / MBEL55E) protein is Large ribosomal subunit protein uL4.